Reading from the N-terminus, the 133-residue chain is Large ribosomal subunit protein uL16c (133 aa).

The protein belongs to the universal ribosomal protein uL16 family. In terms of assembly, part of the 50S ribosomal subunit.

The protein resides in the plastid. This is Large ribosomal subunit protein uL16c from Euglena longa (Euglenophycean alga).